A 527-amino-acid polypeptide reads, in one-letter code: Rhamnogalacturonate lyase A (527 aa).

An N-terminal signal peptide occupies residues 1–19; sequence MLKASLLSFVAFTAQVAHA. 2 disulfide bridges follow: Cys49-Cys92 and Cys183-Cys192. N-linked (GlcNAc...) asparagine glycosylation occurs at Asn350.

The protein belongs to the polysaccharide lyase 4 family.

It is found in the secreted. The catalysed reaction is Endotype eliminative cleavage of L-alpha-rhamnopyranosyl-(1-&gt;4)-alpha-D-galactopyranosyluronic acid bonds of rhamnogalacturonan I domains in ramified hairy regions of pectin leaving L-rhamnopyranose at the reducing end and 4-deoxy-4,5-unsaturated D-galactopyranosyluronic acid at the non-reducing end.. Its function is as follows. Pectinolytic enzyme that has a positive effect in the apple hot-mash liquefaction process. This endolyase hydrolyzes the alpha-L-rhamnopyranosyl-(1,4)-alpha-D-galacturonopyranosyl glycosidic linkage by beta-elimination, thereby generating oligosaccharides terminating at the non-reducing end with a hex-4-enopyranosyluronic acid residue. This chain is Rhamnogalacturonate lyase A (rglA), found in Aspergillus aculeatus.